Reading from the N-terminus, the 251-residue chain is MILYEYPFNERIRTLLRLEDLFERFAFFLAQEDPREHHVALTTLFEIAEVTGRADLKSDLMKELERQRQTLAPFRGNPGIEQNALEAVLGEIEQTLANLAQMQGKTGQHLVDNEWLASIRSRAVIPGGTCKFDLPSYYAWQQWPAEQRRQDIAKWIMPLLPLRDAATIVLRLARESGQASKVMAMQGSYQQMLSGRSYQLMQVRVPRELHVIPEASANKYMLWVRFTMQDGDVRPRAVDIDVPFQLTLCNL.

It belongs to the ZapD family. Interacts with FtsZ.

It is found in the cytoplasm. Functionally, cell division factor that enhances FtsZ-ring assembly. Directly interacts with FtsZ and promotes bundling of FtsZ protofilaments, with a reduction in FtsZ GTPase activity. The chain is Cell division protein ZapD from Burkholderia multivorans (strain ATCC 17616 / 249).